The following is a 152-amino-acid chain: Transcriptional regulator MraZ (152 aa).

SpoVT-AbrB domains lie at 5 to 52 and 81 to 124; these read ASAI…PLHE and AHEV…DEQA.

The protein belongs to the MraZ family. As to quaternary structure, forms oligomers.

Its subcellular location is the cytoplasm. The protein resides in the nucleoid. The chain is Transcriptional regulator MraZ from Shewanella sp. (strain MR-7).